A 113-amino-acid chain; its full sequence is Large ribosomal subunit protein bL17 (113 aa).

This sequence belongs to the bacterial ribosomal protein bL17 family. In terms of assembly, part of the 50S ribosomal subunit. Contacts protein L32.

The chain is Large ribosomal subunit protein bL17 from Clostridium perfringens (strain ATCC 13124 / DSM 756 / JCM 1290 / NCIMB 6125 / NCTC 8237 / Type A).